Here is a 533-residue protein sequence, read N- to C-terminus: Retinoic acid receptor RXR-beta (533 aa).

The interval 1–23 is disordered; the sequence is MSWAARPPFLPQRHAAGQCGPVG. The segment at 1–204 is modulating; sequence MSWAARPPFL…PGGPGAGKRL (204 aa). Residue arginine 25 is modified to Omega-N-methylarginine. The tract at residues 36–181 is disordered; that stretch reads WRRRRPWLDP…GSGPPEDVKP (146 aa). Residues 46–61 are compositionally biased toward low complexity; the sequence is AAAAAAAVAGGEQQTP. Positions 67 to 82 are enriched in basic and acidic residues; that stretch reads EAGRDGMGDSGRDSRS. Pro residues-rich tracts occupy residues 89-109 and 118-131; these read NPLP…PPST and APPP…PLGS. The span at 132-143 shows a compositional bias: low complexity; that stretch reads PFPVISSSMGSP. Positions 144–153 are enriched in pro residues; the sequence is GLPPPAPPGF. 2 consecutive NR C4-type zinc fingers follow at residues 205-225 and 241-265; these read CAIC…CEGC and CRDN…YQKC. The nuclear receptor DNA-binding region spans 205–270; the sequence is CAICGDRSSG…RYQKCLATGM (66 aa). The segment at 271-295 is hinge; the sequence is KREAVQEERQRGKDKDGDGEGAGGA. Residues 276-288 are compositionally biased toward basic and acidic residues; that stretch reads QEERQRGKDKDGD. Disordered stretches follow at residues 276–299 and 313–336; these read QEER…PEEM and QKSD…NDPV. The 234-residue stretch at 296 to 529 folds into the NR LBD domain; it reads PEEMPVDRIL…TFLMEMLEAP (234 aa). The segment covering 320-329 has biased composition (gly residues); that stretch reads EGPGGTGGSG.

The protein belongs to the nuclear hormone receptor family. NR2 subfamily. As to quaternary structure, homodimer (in vitro). Heterodimer with other retinoic acid receptor family members. Binds DNA preferentially as a RAR/RXR heterodimer. Interacts with NR1H3. Interacts with AKAP13. As to expression, expressed in aortic endothelial cells (at protein level). Expressed in monocytes. Expressed in a variety of tumor cell lines.

It localises to the nucleus. It is found in the cytoplasm. Receptor for retinoic acid. Retinoic acid receptors bind as heterodimers to their target response elements in response to their ligands, all-trans or 9-cis retinoic acid, and regulate gene expression in various biological processes. The RAR/RXR heterodimers bind to the retinoic acid response elements (RARE). The protein is Retinoic acid receptor RXR-beta (RXRB) of Homo sapiens (Human).